We begin with the raw amino-acid sequence, 394 residues long: Probable malate--CoA ligase subunit beta (394 aa).

The 236-residue stretch at 9–244 (KELLARHGVH…KSQEDPRETF (236 aa)) folds into the ATP-grasp domain. ATP contacts are provided by lysine 46, glutamate 99, valine 102, and glutamate 107. Residues asparagine 199 and aspartate 213 each contribute to the Mg(2+) site.

It belongs to the succinate/malate CoA ligase beta subunit family. In terms of assembly, heterotetramer of two alpha and two beta subunits. It depends on Mg(2+) as a cofactor.

The enzyme catalyses (S)-malate + ATP + CoA = (S)-malyl-CoA + ADP + phosphate. Its pathway is one-carbon metabolism; formaldehyde assimilation via serine pathway. In Mesorhizobium japonicum (strain LMG 29417 / CECT 9101 / MAFF 303099) (Mesorhizobium loti (strain MAFF 303099)), this protein is Probable malate--CoA ligase subunit beta (mtkA).